A 1007-amino-acid chain; its full sequence is Lysosomal alpha-mannosidase (1007 aa).

The signal sequence occupies residues 1-47 (MGASVLPLGLGAGDCQSSSGRRMSACLPRTALSFLLSLLLATPGARA). 2 disulfides stabilise this stretch: C53–C356 and C266–C271. Zn(2+) is bound by residues H70 and D72. An N-linked (GlcNAc...) asparagine glycan is attached at N131. Residue D194 participates in Zn(2+) binding. The Nucleophile role is filled by D194. N308, N343, and N365 each carry an N-linked (GlcNAc...) asparagine glycan. 2 cysteine pairs are disulfide-bonded: C410–C470 and C491–C499. H444 serves as a coordination point for Zn(2+). N-linked (GlcNAc...) asparagine glycosylation is found at N495, N540, N639, N686, N760, and N927.

This sequence belongs to the glycosyl hydrolase 38 family. Zn(2+) is required as a cofactor.

The protein resides in the lysosome. It catalyses the reaction Hydrolysis of terminal, non-reducing alpha-D-mannose residues in alpha-D-mannosides.. Necessary for the catabolism of N-linked carbohydrates released during glycoprotein turnover. The protein is Lysosomal alpha-mannosidase (MAN2B1) of Cavia porcellus (Guinea pig).